The sequence spans 1350 residues: Ubiquitin carboxyl-terminal hydrolase 47 (1350 aa).

The segment at 111 to 138 (DGEQPQLTSDESGTADSSGLDDSSQEKF) is disordered. Residues 115-132 (PQLTSDESGTADSSGLDD) show a composition bias toward polar residues. Residues 173 to 548 (VGLVNQAMTC…NAYMLMYRLK (376 aa)) form the USP domain. Catalysis depends on Cys-182, which acts as the Nucleophile. The disordered stretch occupies residues 409–437 (EDEKSPQTDSCTDSGAENEGSCHSDQMSN). The span at 415 to 437 (QTDSCTDSGAENEGSCHSDQMSN) shows a compositional bias: polar residues. The active-site Proton acceptor is the His-487. Disordered regions lie at residues 815–836 (HPRP…PQED) and 859–1000 (SLQQ…ESGK). A compositionally biased stretch (polar residues) spans 859-877 (SLQQHQDGGNGDSSKSTEG). A compositionally biased stretch (basic and acidic residues) spans 916-926 (PEERSDSDVNN). Positions 929 to 945 (STSSVDSDILSSSHSSD) are enriched in low complexity. Over residues 973–982 (KANDGKKETW) the composition is skewed to basic and acidic residues. The segment covering 983 to 996 (DTAEEDSGTDSEYD) has biased composition (acidic residues).

This sequence belongs to the peptidase C19 family. USP47 subfamily.

It localises to the cytoplasm. The catalysed reaction is Thiol-dependent hydrolysis of ester, thioester, amide, peptide and isopeptide bonds formed by the C-terminal Gly of ubiquitin (a 76-residue protein attached to proteins as an intracellular targeting signal).. Its function is as follows. Ubiquitin-specific protease that specifically deubiquitinates monoubiquitinated DNA polymerase beta (polb), stabilizing polb thereby playing a role in base-excision repair (BER). The chain is Ubiquitin carboxyl-terminal hydrolase 47 (usp47) from Xenopus laevis (African clawed frog).